The chain runs to 352 residues: UDP-N-acetylglucosamine--N-acetylmuramyl-(pentapeptide) pyrophosphoryl-undecaprenol N-acetylglucosamine transferase (352 aa).

2 residues coordinate UDP-N-acetyl-alpha-D-glucosamine: serine 195 and glutamine 287.

Belongs to the glycosyltransferase 28 family. MurG subfamily.

It localises to the cell membrane. The catalysed reaction is Mur2Ac(oyl-L-Ala-gamma-D-Glu-L-Lys-D-Ala-D-Ala)-di-trans,octa-cis-undecaprenyl diphosphate + UDP-N-acetyl-alpha-D-glucosamine = beta-D-GlcNAc-(1-&gt;4)-Mur2Ac(oyl-L-Ala-gamma-D-Glu-L-Lys-D-Ala-D-Ala)-di-trans,octa-cis-undecaprenyl diphosphate + UDP + H(+). It participates in cell wall biogenesis; peptidoglycan biosynthesis. Cell wall formation. Catalyzes the transfer of a GlcNAc subunit on undecaprenyl-pyrophosphoryl-MurNAc-pentapeptide (lipid intermediate I) to form undecaprenyl-pyrophosphoryl-MurNAc-(pentapeptide)GlcNAc (lipid intermediate II). The chain is UDP-N-acetylglucosamine--N-acetylmuramyl-(pentapeptide) pyrophosphoryl-undecaprenol N-acetylglucosamine transferase from Streptococcus pneumoniae (strain JJA).